Consider the following 370-residue polypeptide: Phosphate acyltransferase (370 aa).

Belongs to the PlsX family. As to quaternary structure, homodimer. Probably interacts with PlsY.

It localises to the cytoplasm. It carries out the reaction a fatty acyl-[ACP] + phosphate = an acyl phosphate + holo-[ACP]. It functions in the pathway lipid metabolism; phospholipid metabolism. Its function is as follows. Catalyzes the reversible formation of acyl-phosphate (acyl-PO(4)) from acyl-[acyl-carrier-protein] (acyl-ACP). This enzyme utilizes acyl-ACP as fatty acyl donor, but not acyl-CoA. The protein is Phosphate acyltransferase of Paracoccus denitrificans (strain Pd 1222).